Here is a 195-residue protein sequence, read N- to C-terminus: Neurensin-1 (195 aa).

A run of 2 helical transmembrane segments spans residues 66 to 86 (LISGTVFVILGLTVLAVGFLV) and 120 to 140 (AVLFCIGGTSMAGCLLMSVFV).

This sequence belongs to the VMP family. In terms of tissue distribution, expressed in brain. Not detectable in other tissues tested.

It is found in the membrane. Its subcellular location is the cell projection. The protein localises to the neuron projection. May play an important role in neural organelle transport, and in transduction of nerve signals or in nerve growth. May play a role in neurite extension. May play a role in memory consolidation. This chain is Neurensin-1, found in Homo sapiens (Human).